We begin with the raw amino-acid sequence, 240 residues long: UDP-2,3-diacylglucosamine hydrolase (240 aa).

Mn(2+) is bound by residues Asp7, His9, Asp40, Asn78, and His113. Position 78–79 (78–79 (NR)) interacts with substrate. The substrate site is built by Asp121, Ser159, Lys166, and His194. Residues His194 and His196 each contribute to the Mn(2+) site.

Belongs to the LpxH family. Mn(2+) is required as a cofactor.

The protein localises to the cell inner membrane. It carries out the reaction UDP-2-N,3-O-bis[(3R)-3-hydroxytetradecanoyl]-alpha-D-glucosamine + H2O = 2-N,3-O-bis[(3R)-3-hydroxytetradecanoyl]-alpha-D-glucosaminyl 1-phosphate + UMP + 2 H(+). The protein operates within glycolipid biosynthesis; lipid IV(A) biosynthesis; lipid IV(A) from (3R)-3-hydroxytetradecanoyl-[acyl-carrier-protein] and UDP-N-acetyl-alpha-D-glucosamine: step 4/6. Hydrolyzes the pyrophosphate bond of UDP-2,3-diacylglucosamine to yield 2,3-diacylglucosamine 1-phosphate (lipid X) and UMP by catalyzing the attack of water at the alpha-P atom. Involved in the biosynthesis of lipid A, a phosphorylated glycolipid that anchors the lipopolysaccharide to the outer membrane of the cell. This Pseudomonas putida (strain ATCC 47054 / DSM 6125 / CFBP 8728 / NCIMB 11950 / KT2440) protein is UDP-2,3-diacylglucosamine hydrolase.